Consider the following 418-residue polypeptide: Galactooligosaccharides transport system permease protein GanP (418 aa).

The next 9 membrane-spanning stretches (helical) occupy residues 25 to 45, 65 to 85, 129 to 149, 191 to 211, 226 to 246, 279 to 299, 323 to 343, 357 to 379, and 388 to 408; these read IKGIVFLFLGASFFAVFGDLL, VFLLAEGIIAVIVTCFGLAVY, LFILIFAVIFPILFSFALAFT, VVWTLAASTLQVTLGIFLAII, ILILPWAVPGFVTILIFAGLF, LILMQGWLGFPYIFLVSTGVL, YITLPMVFIAMAPIIITQFTF, GGPAVTGSTAGGTDILVSWIYKL, and LAAALTILLSVFVISIALWQF. One can recognise an ABC transmembrane type-1 domain in the interval 187–407; that stretch reads LAWTVVWTLA…VFVISIALWQ (221 aa).

It belongs to the binding-protein-dependent transport system permease family. In terms of assembly, the complex is composed of two ATP-binding proteins (MsmX), two transmembrane proteins (GanP and GanQ) and a solute-binding protein (GanS).

The protein localises to the cell membrane. Involved in galactan degradation. Part of the ABC transporter complex GanPQS involved in the uptake of galactooligosaccharides. Responsible for the translocation of the substrate across the membrane. The chain is Galactooligosaccharides transport system permease protein GanP (ganP) from Bacillus subtilis (strain 168).